A 497-amino-acid chain; its full sequence is NADH-quinone oxidoreductase subunit N (497 aa).

Transmembrane regions (helical) follow at residues 14-34 (LMAM…MLSI), 45-65 (SLTV…WGLF), 86-106 (IFYS…AYPW), 116-136 (EFYL…SAQH), 137-157 (LAAV…LLGY), 171-191 (YFVL…MLYA), 215-235 (ILAG…LVPF), 253-273 (FLGT…FLYV), 281-301 (LNTA…LMAL), 309-329 (LLGY…IALH), 338-358 (VAVY…VVSL), 385-405 (AAVM…LGFI), 420-439 (WVLT…YYLR), and 461-481 (AFTA…VFGI).

The protein belongs to the complex I subunit 2 family. As to quaternary structure, NDH-1 is composed of 13 different subunits. Subunits NuoA, H, J, K, L, M, N constitute the membrane sector of the complex.

The protein resides in the cell membrane. The enzyme catalyses a quinone + NADH + 5 H(+)(in) = a quinol + NAD(+) + 4 H(+)(out). In terms of biological role, NDH-1 shuttles electrons from NADH, via FMN and iron-sulfur (Fe-S) centers, to quinones in the respiratory chain. The immediate electron acceptor for the enzyme in this species is believed to be ubiquinone. Couples the redox reaction to proton translocation (for every two electrons transferred, four hydrogen ions are translocated across the cytoplasmic membrane), and thus conserves the redox energy in a proton gradient. The sequence is that of NADH-quinone oxidoreductase subunit N from Hamiltonella defensa subsp. Acyrthosiphon pisum (strain 5AT).